A 319-amino-acid polypeptide reads, in one-letter code: Cytochrome c biogenesis protein CcsA (319 aa).

8 helical membrane-spanning segments follow: residues 9 to 29 (ILTH…LISL), 48 to 68 (TFFC…HFPL), 71 to 91 (LYES…VPYF), 98 to 118 (LSTI…SGLL), 143 to 163 (MILG…LLVI), 225 to 245 (IISL…VWAN), 258 to 275 (ETWA…LHTR), and 286 to 306 (AIVA…VNLL).

It belongs to the CcmF/CycK/Ccl1/NrfE/CcsA family. In terms of assembly, may interact with Ccs1.

The protein resides in the plastid. It is found in the chloroplast thylakoid membrane. Functionally, required during biogenesis of c-type cytochromes (cytochrome c6 and cytochrome f) at the step of heme attachment. In Eucalyptus globulus subsp. globulus (Tasmanian blue gum), this protein is Cytochrome c biogenesis protein CcsA.